Here is a 461-residue protein sequence, read N- to C-terminus: Mannose-6-phosphate isomerase (461 aa).

Residues Gln107, His109, Glu134, and His291 each contribute to the Zn(2+) site. Arg310 is a catalytic residue.

This sequence belongs to the mannose-6-phosphate isomerase type 1 family. Zn(2+) serves as cofactor.

The protein resides in the cytoplasm. The catalysed reaction is D-mannose 6-phosphate = D-fructose 6-phosphate. The protein operates within nucleotide-sugar biosynthesis; GDP-alpha-D-mannose biosynthesis; alpha-D-mannose 1-phosphate from D-fructose 6-phosphate: step 1/2. In terms of biological role, involved in the synthesis of the GDP-mannose and dolichol-phosphate-mannose required for a number of critical mannosyl transfer reactions. In Emericella nidulans (strain FGSC A4 / ATCC 38163 / CBS 112.46 / NRRL 194 / M139) (Aspergillus nidulans), this protein is Mannose-6-phosphate isomerase (manA).